Reading from the N-terminus, the 242-residue chain is UPF0273 protein MJ1359 (242 aa).

Residues 2–242 (KRVKTGIPGM…VYPDKVLKLR (241 aa)) enclose the KaiC domain. 29–36 (GGPGTGKS) is a binding site for ATP.

This sequence belongs to the UPF0273 family.

In Methanocaldococcus jannaschii (strain ATCC 43067 / DSM 2661 / JAL-1 / JCM 10045 / NBRC 100440) (Methanococcus jannaschii), this protein is UPF0273 protein MJ1359.